The chain runs to 121 residues: ATP synthase epsilon chain (121 aa).

It belongs to the ATPase epsilon chain family. In terms of assembly, F-type ATPases have 2 components, CF(1) - the catalytic core - and CF(0) - the membrane proton channel. CF(1) has five subunits: alpha(3), beta(3), gamma(1), delta(1), epsilon(1). CF(0) has three main subunits: a, b and c.

The protein resides in the cell membrane. Functionally, produces ATP from ADP in the presence of a proton gradient across the membrane. The protein is ATP synthase epsilon chain of Mycobacterium sp. (strain JLS).